A 136-amino-acid polypeptide reads, in one-letter code: Keratin-associated protein 9-3 (136 aa).

11 tandem repeats follow at residues 3–7, 21–25, 31–35, 36–40, 41–45, 46–50, 87–91, 97–101, 107–111, 117–121, and 126–130. An 11 X 5 AA repeats of C-C-[AEQVR]-[ALPTV]-[AGHST] region spans residues 21–130; it reads CCQPTCTQSS…ACCCYCCQPS (110 aa).

Belongs to the KRTAP type 9 family. As to quaternary structure, interacts with hair keratins.

Its function is as follows. In the hair cortex, hair keratin intermediate filaments are embedded in an interfilamentous matrix, consisting of hair keratin-associated proteins (KRTAP), which are essential for the formation of a rigid and resistant hair shaft through their extensive disulfide bond cross-linking with abundant cysteine residues of hair keratins. The matrix proteins include the high-sulfur and high-glycine-tyrosine keratins. This Mus musculus (Mouse) protein is Keratin-associated protein 9-3.